The chain runs to 319 residues: Acetyl-coenzyme A carboxylase carboxyl transferase subunit alpha (319 aa).

The CoA carboxyltransferase C-terminal domain maps to 38 to 293; that stretch reads HALQDKLRMR…KAVLLNELDA (256 aa).

It belongs to the AccA family. In terms of assembly, acetyl-CoA carboxylase is a heterohexamer composed of biotin carboxyl carrier protein (AccB), biotin carboxylase (AccC) and two subunits each of ACCase subunit alpha (AccA) and ACCase subunit beta (AccD).

The protein localises to the cytoplasm. It carries out the reaction N(6)-carboxybiotinyl-L-lysyl-[protein] + acetyl-CoA = N(6)-biotinyl-L-lysyl-[protein] + malonyl-CoA. It participates in lipid metabolism; malonyl-CoA biosynthesis; malonyl-CoA from acetyl-CoA: step 1/1. Functionally, component of the acetyl coenzyme A carboxylase (ACC) complex. First, biotin carboxylase catalyzes the carboxylation of biotin on its carrier protein (BCCP) and then the CO(2) group is transferred by the carboxyltransferase to acetyl-CoA to form malonyl-CoA. This Stenotrophomonas maltophilia (strain K279a) protein is Acetyl-coenzyme A carboxylase carboxyl transferase subunit alpha.